Consider the following 209-residue polypeptide: Ribosomal RNA large subunit methyltransferase E (209 aa).

S-adenosyl-L-methionine is bound by residues Gly-60, Trp-62, Asp-80, Asp-96, and Asp-121. Lys-161 (proton acceptor) is an active-site residue.

The protein belongs to the class I-like SAM-binding methyltransferase superfamily. RNA methyltransferase RlmE family.

Its subcellular location is the cytoplasm. The catalysed reaction is uridine(2552) in 23S rRNA + S-adenosyl-L-methionine = 2'-O-methyluridine(2552) in 23S rRNA + S-adenosyl-L-homocysteine + H(+). Its function is as follows. Specifically methylates the uridine in position 2552 of 23S rRNA at the 2'-O position of the ribose in the fully assembled 50S ribosomal subunit. This is Ribosomal RNA large subunit methyltransferase E from Pseudomonas fluorescens (strain Pf0-1).